Here is a 319-residue protein sequence, read N- to C-terminus: MFDDLSNYRPANPALWQGRKDTANQERFFQKITFIDNQNELMTKDKKTIFLGFASDTGIKRNLGRTGAKLGPDQIKTQLAKLPCHNNKHYVDLGNVVCENDELELSQSQFAQIVHFCHENGHQICAFGGGHEIAWAHYQGLSSLYPKLGVINFDAHFDLRPYKKGEFGNSGTPFSQIATYCEEKKMPFHYCCIGVQKFGNTPSLFEKAKKLNVSYLSAEDLYEQSQAWQIAFLDDFILNLDHIYLTICLDVLAECYAPGVSAPQALGLSPWQIMPLLKYLIQSGKVVSLDIAELSPPLDSELKTARLAALIIAELLDTN.

His131, Asp154, His156, Asp158, Cys248, and Asp250 together coordinate Mn(2+).

Belongs to the arginase family. The cofactor is Mn(2+).

The catalysed reaction is N-formimidoyl-L-glutamate + H2O = formamide + L-glutamate. It functions in the pathway amino-acid degradation; L-histidine degradation into L-glutamate; L-glutamate from N-formimidoyl-L-glutamate (hydrolase route): step 1/1. Functionally, catalyzes the conversion of N-formimidoyl-L-glutamate to L-glutamate and formamide. The protein is Formimidoylglutamase of Legionella pneumophila subsp. pneumophila (strain Philadelphia 1 / ATCC 33152 / DSM 7513).